The chain runs to 81 residues: Photosystem I iron-sulfur center (81 aa).

2 4Fe-4S ferredoxin-type domains span residues 2-31 and 39-68; these read SHSV…MVPW and IASA…VRVY. C11, C14, C17, C21, C48, C51, C54, and C58 together coordinate [4Fe-4S] cluster.

In terms of assembly, the eukaryotic PSI reaction center is composed of at least 11 subunits. The cofactor is [4Fe-4S] cluster.

The protein localises to the plastid. Its subcellular location is the chloroplast thylakoid membrane. The enzyme catalyses reduced [plastocyanin] + hnu + oxidized [2Fe-2S]-[ferredoxin] = oxidized [plastocyanin] + reduced [2Fe-2S]-[ferredoxin]. Functionally, apoprotein for the two 4Fe-4S centers FA and FB of photosystem I (PSI); essential for photochemical activity. FB is the terminal electron acceptor of PSI, donating electrons to ferredoxin. The C-terminus interacts with PsaA/B/D and helps assemble the protein into the PSI complex. Required for binding of PsaD and PsaE to PSI. PSI is a plastocyanin/cytochrome c6-ferredoxin oxidoreductase, converting photonic excitation into a charge separation, which transfers an electron from the donor P700 chlorophyll pair to the spectroscopically characterized acceptors A0, A1, FX, FA and FB in turn. The protein is Photosystem I iron-sulfur center of Pleurastrum terricola (Filamentous green alga).